A 372-amino-acid polypeptide reads, in one-letter code: Ubl carboxyl-terminal hydrolase 18 (372 aa).

Positions Ser-19–Pro-45 are disordered. The segment covering Leu-26 to Pro-45 has biased composition (basic and acidic residues). The tract at residues Met-36–Pro-51 is mediates interaction with IFNAR2. The mediates interaction with STAT2 stretch occupies residues Pro-51 to Asp-112. One can recognise a USP domain in the interval Val-55 to Met-370. The active-site Nucleophile is Cys-64. The segment at Glu-303–Gly-312 is mediates interaction with STAT2 and necessary for the negative regulation of the type I IFN signaling pathway. The interval Met-313–Cys-372 is mediates interaction with IFNAR2. Residue His-318 is the Proton acceptor of the active site.

This sequence belongs to the peptidase C19 family. Interacts with STAT2; the interaction is direct. Interacts with IFNAR2; indirectly via STAT2, it negatively regulates the assembly of the ternary interferon-IFNAR1-IFNAR2 complex and inhibits type I interferon signaling. Interacts with STING1. Interacts with USP20.

Its subcellular location is the cytoplasm. The protein localises to the nucleus. It catalyses the reaction Thiol-dependent hydrolysis of ester, thioester, amide, peptide and isopeptide bonds formed by the C-terminal Gly of ubiquitin (a 76-residue protein attached to proteins as an intracellular targeting signal).. Its function is as follows. Interferon-induced ISG15-specific protease that plays a crucial role for maintaining a proper balance of ISG15-conjugated proteins in cells. Regulates protein ISGylation by efficiently cleaving ISG15 conjugates linked via isopeptide bonds. Regulates T-cell activation and T-helper 17 (Th17) cell differentiation by deubiquitinating TAK1, likely to keep TAK1-TAB complexes in steady conditions. In turn, restricts activation of NF-kappa-B, NFAT, and JNK as well as expression of IL2 in T-cells after TCR activation. Acts as a molecular adapter with USP20 to promote innate antiviral response through deubiquitinating STING1. Involved also in the negative regulation of the inflammatory response triggered by type I interferon. Upon recruitment by STAT2 to the type I interferon receptor subunit IFNAR2 interferes with the assembly of the ternary interferon-IFNAR1-IFNAR2 complex and acts as a negative regulator of the type I interferon signaling pathway. Functionally, has enzymatic activity similar to isoform 1 and interferes with type I interferon signaling. Major deISGylation enzyme for nuclear proteins. The polypeptide is Ubl carboxyl-terminal hydrolase 18 (USP18) (Homo sapiens (Human)).